Consider the following 529-residue polypeptide: Tyrosinase (529 aa).

The first 18 residues, 1 to 18 (MLLAVLYCLLWSFQTSAG), serve as a signal peptide directing secretion. Residues 19–476 (HFPRACVSSK…YLEQASRIWS (458 aa)) are Lumenal, melanosome-facing. N-linked (GlcNAc...) asparagine glycans are attached at residues asparagine 86, asparagine 111, and asparagine 161. The Cu cation site is built by histidine 180, histidine 202, and histidine 211. The N-linked (GlcNAc...) asparagine glycan is linked to asparagine 230. Residues 287-313 (SLCNGTPEGPLRRNPGNHDKSRTPRLP) are disordered. Asparagine 337 carries an N-linked (GlcNAc...) asparagine glycan. Positions 363 and 367 each coordinate Cu cation. Asparagine 371 carries N-linked (GlcNAc...) asparagine glycosylation. Residue histidine 390 participates in Cu cation binding. A helical transmembrane segment spans residues 477 to 497 (WLLGAAMVGAVLTALLAGLVS). Residues 498-529 (LLCRHKRKQLPEEKQPLLMEKEDYHSLYQSHL) lie on the Cytoplasmic side of the membrane.

Belongs to the tyrosinase family. Forms an OPN3-dependent complex with DCT in response to blue light in melanocytes. Cu(2+) is required as a cofactor. Glycosylated.

Its subcellular location is the melanosome membrane. The protein localises to the melanosome. The catalysed reaction is 2 L-dopa + O2 = 2 L-dopaquinone + 2 H2O. It catalyses the reaction L-tyrosine + O2 = L-dopaquinone + H2O. The enzyme catalyses 2 5,6-dihydroxyindole-2-carboxylate + O2 = 2 indole-5,6-quinone-2-carboxylate + 2 H2O. Functionally, this is a copper-containing oxidase that functions in the formation of pigments such as melanins and other polyphenolic compounds. Catalyzes the initial and rate limiting step in the cascade of reactions leading to melanin production from tyrosine. In addition to hydroxylating tyrosine to DOPA (3,4-dihydroxyphenylalanine), also catalyzes the oxidation of DOPA to DOPA-quinone, and possibly the oxidation of DHI (5,6-dihydroxyindole) to indole-5,6 quinone. The sequence is that of Tyrosinase from Homo sapiens (Human).